Consider the following 391-residue polypeptide: Coproporphyrin III ferrochelatase (391 aa).

Fe-coproporphyrin III contacts are provided by Ser79 and Tyr148. Fe(2+)-binding residues include His211 and Glu305.

This sequence belongs to the ferrochelatase family.

Its subcellular location is the cytoplasm. It carries out the reaction Fe-coproporphyrin III + 2 H(+) = coproporphyrin III + Fe(2+). It functions in the pathway porphyrin-containing compound metabolism; protoheme biosynthesis. Functionally, involved in coproporphyrin-dependent heme b biosynthesis. Catalyzes the insertion of ferrous iron into coproporphyrin III to form Fe-coproporphyrin III. The sequence is that of Coproporphyrin III ferrochelatase from Tropheryma whipplei (strain TW08/27) (Whipple's bacillus).